We begin with the raw amino-acid sequence, 361 residues long: Plasmid recombination enzyme (361 aa).

Positions 44 and 114 each coordinate DNA. Residues 331–361 are disordered; that stretch reads RAGLKEPSKKAPESSQELDRHKSDELGGPHL.

Belongs to the plasmid mobilization pre family.

In terms of biological role, the interaction of the RSA site and the pre protein may not only serve a function in plasmid maintenance, but also contribute to the distribution of small antibiotic resistance plasmids among Gram-positive bacteria. The sequence is that of Plasmid recombination enzyme (preA) from Lactiplantibacillus plantarum (Lactobacillus plantarum).